A 475-amino-acid polypeptide reads, in one-letter code: UDP-N-acetylmuramate--L-alanine ligase (475 aa).

119-125 serves as a coordination point for ATP; that stretch reads GTHGKTT.

It belongs to the MurCDEF family.

It is found in the cytoplasm. It catalyses the reaction UDP-N-acetyl-alpha-D-muramate + L-alanine + ATP = UDP-N-acetyl-alpha-D-muramoyl-L-alanine + ADP + phosphate + H(+). The protein operates within cell wall biogenesis; peptidoglycan biosynthesis. In terms of biological role, cell wall formation. The sequence is that of UDP-N-acetylmuramate--L-alanine ligase from Wigglesworthia glossinidia brevipalpis.